Reading from the N-terminus, the 1307-residue chain is MDFVPRLNSVLTLVLSGLWHFGLTATNCDNCDDPLASFLSLRAFSSSSDVTGSSSPAHLNWRMGTGGWSPAYSNAQQWLQIDLGNRVEITAVATQGRYGSSDWVTSYRLMFSDTGHNWQEYKQEDNIWTFVGNMNADSVVHHKLLHSVRARFVRFVPLKWNPDGKIGMRMEVYGCSYRSDVADFDGHSSLLYRFNQKTMSTLKDMISLKFKSMQGDGVLLHGEGQRGDYITLELQNGRLALYLNLDGGQARLSSIAPSAILGSLLDDQQWHSVLLERVGKQTNFTVDTNTEHFQIKAETDALDIDYELSFGGIPIPSKPGTFLKKSFHGCIENLYYNGVNIIDLAKRRKHQIYSGNVTFSCSEPQIVPITFVNSRSSYLLLPGTPRIDGLSVSFQFRTWNEDGLLLSTELSESSGTLLLILEGGTLRLLIKKVAGHGTEIITGSGLNDGLWHFVSINARRNRVTLTLDNDAASLPPDISWLQIYSGNSYYFGGCPDNLTDSQCLNPIKAFQGCMRLIFIDNQPKDLISVQQGSLGNFSDLHIDLCSIKDRCLPNYCEHGGHCVQTWTTFYCNCSNTGYTGATCHDSIYEQSCEVYRHRGNNTSGFFFVDSDGSGPLEPLQLYCNITEDKIWMTIQHNITELTQVQGSNAEKPYSMTLNYGGSMDQLVALIDGSEYCEQEVTYHCRRSRLLNTPDGAPFTWWIGRSNEKHHYWGGSVPGIQKCGCGLEQSCLDIGHFCNCDADTDEWANDTGFLSFKDHLPVTQIIITDTNRSNSEAAWRIGPLRCYGDRHFWNAVSFSTEASYLHFPTSHVEFSIDISFFFKTTALSGVFIENLGIKDFLRLELSSPSEVTFAIDVGNGPTELLVQSPSPLNDNQWHYIQAERNLKETSLQVDNFPRIMRETTEKGHFQLQLNSQMFVGGTSSRQKGFLGCIRSLHLNGQNIDLEERGMVTSGVRPGCPGHCSSYGNNCHNGGKCVEKHNSYSCDCTKSPYEGPFCQKEISALFDSTTSITYMFQEPYPVSKNTSTSSSAIYTDTVLSKETILLSFVTAQAPTLLLYLNFSTPSFLALLLSRNGSLQILYHLSKGESHMFTVSTENLANRRVHHVKMNRDGTELSIQMDQQLFSYNFPLEAEFLTVRSLILGKVTETLGLDPRVARANSLGFIGCLSSVQYNHIAPLKAALRHASIAPATVQGSLREFSCGSMVDSDVNAVTTVYSSSDPFGKTDDHDPLTNAVLSDSAVIGGVIAVVTFITFCVIGIMTRFLYQHKQSHCTSQKKEKEYSENLDSSFRHDIDLQSTTSKCKREYFI.

An N-terminal signal peptide occupies residues 1 to 24 (MDFVPRLNSVLTLVLSGLWHFGLT). The Extracellular segment spans residues 25–1238 (ATNCDNCDDP…PLTNAVLSDS (1214 aa)). Residues 31–175 (CDDPLASFLS…IGMRMEVYGC (145 aa)) enclose the F5/8 type C domain. Cysteine 31 and cysteine 175 are oxidised to a cystine. Laminin G-like domains are found at residues 181 to 361 (VADF…TFSC) and 368 to 545 (PITF…IDLC). Residue asparagine 283 is glycosylated (N-linked (GlcNAc...) asparagine). Cysteine 330 and cysteine 361 are oxidised to a cystine. Residue asparagine 497 is glycosylated (N-linked (GlcNAc...) asparagine). Intrachain disulfides connect cysteine 513-cysteine 545, cysteine 551-cysteine 562, cysteine 556-cysteine 571, and cysteine 573-cysteine 583. In terms of domain architecture, EGF-like 1 spans 547 to 584 (IKDRCLPNYCEHGGHCVQTWTTFYCNCSNTGYTGATCH). One can recognise a Fibrinogen C-terminal domain in the interval 585-792 (DSIYEQSCEV…LRCYGDRHFW (208 aa)). Residues asparagine 600, asparagine 624, and asparagine 637 are each glycosylated (N-linked (GlcNAc...) asparagine). Positions 793–958 (NAVSFSTEAS…MVTSGVRPGC (166 aa)) constitute a Laminin G-like 3 domain. 5 disulfides stabilise this stretch: cysteine 931–cysteine 958, cysteine 962–cysteine 975, cysteine 969–cysteine 984, cysteine 986–cysteine 996, and cysteine 1165–cysteine 1200. Residues 959–997 (PGHCSSYGNNCHNGGKCVEKHNSYSCDCTKSPYEGPFCQ) enclose the EGF-like 2 domain. The 182-residue stretch at 1019–1200 (PVSKNTSTSS…VQGSLREFSC (182 aa)) folds into the Laminin G-like 4 domain. A helical transmembrane segment spans residues 1239-1259 (AVIGGVIAVVTFITFCVIGIM). Residues 1260-1307 (TRFLYQHKQSHCTSQKKEKEYSENLDSSFRHDIDLQSTTSKCKREYFI) are Cytoplasmic-facing.

The protein belongs to the neurexin family.

It localises to the membrane. May play a role in the correct development and proper functioning of the peripheral and central nervous system and be involved in cell adhesion and intercellular communication. The sequence is that of Contactin-associated protein like 5-3 (Cntnap5c) from Rattus norvegicus (Rat).